Reading from the N-terminus, the 208-residue chain is 2-dehydro-3-deoxy-phosphogluconate aldolase (208 aa).

E41 (proton acceptor) is an active-site residue. R45, T68, and K128 together coordinate pyruvate. Residue K128 is the Schiff-base intermediate with substrate of the active site.

The protein belongs to the KHG/KDPG aldolase family. In terms of assembly, homotrimer.

The protein resides in the cytoplasm. The catalysed reaction is 2-dehydro-3-deoxy-6-phospho-D-gluconate = D-glyceraldehyde 3-phosphate + pyruvate. The protein operates within carbohydrate acid metabolism; 2-dehydro-3-deoxy-D-gluconate degradation; D-glyceraldehyde 3-phosphate and pyruvate from 2-dehydro-3-deoxy-D-gluconate: step 2/2. In terms of biological role, involved in the degradation of glucose via the Entner-Doudoroff pathway. Catalyzes the reversible, stereospecific retro-aldol cleavage of 2-keto-3-deoxy-6-phosphogluconate (KDPG) to pyruvate and D-glyceraldehyde-3-phosphate. In Zymomonas mobilis subsp. mobilis (strain ATCC 31821 / ZM4 / CP4), this protein is 2-dehydro-3-deoxy-phosphogluconate aldolase.